Here is a 214-residue protein sequence, read N- to C-terminus: ATP phosphoribosyltransferase (214 aa).

Belongs to the ATP phosphoribosyltransferase family. Short subfamily. Heteromultimer composed of HisG and HisZ subunits.

Its subcellular location is the cytoplasm. It carries out the reaction 1-(5-phospho-beta-D-ribosyl)-ATP + diphosphate = 5-phospho-alpha-D-ribose 1-diphosphate + ATP. It participates in amino-acid biosynthesis; L-histidine biosynthesis; L-histidine from 5-phospho-alpha-D-ribose 1-diphosphate: step 1/9. Its function is as follows. Catalyzes the condensation of ATP and 5-phosphoribose 1-diphosphate to form N'-(5'-phosphoribosyl)-ATP (PR-ATP). Has a crucial role in the pathway because the rate of histidine biosynthesis seems to be controlled primarily by regulation of HisG enzymatic activity. The sequence is that of ATP phosphoribosyltransferase from Leptothrix cholodnii (strain ATCC 51168 / LMG 8142 / SP-6) (Leptothrix discophora (strain SP-6)).